Consider the following 504-residue polypeptide: Glucose-6-phosphate isomerase (504 aa).

The Proton donor role is filled by E333. Residues H364 and K473 contribute to the active site.

The protein belongs to the GPI family.

Its subcellular location is the cytoplasm. It catalyses the reaction alpha-D-glucose 6-phosphate = beta-D-fructose 6-phosphate. It functions in the pathway carbohydrate biosynthesis; gluconeogenesis. It participates in carbohydrate degradation; glycolysis; D-glyceraldehyde 3-phosphate and glycerone phosphate from D-glucose: step 2/4. Functionally, catalyzes the reversible isomerization of glucose-6-phosphate to fructose-6-phosphate. The protein is Glucose-6-phosphate isomerase of Xanthomonas euvesicatoria pv. vesicatoria (strain 85-10) (Xanthomonas campestris pv. vesicatoria).